The primary structure comprises 105 residues: Intracellular chorismate mutase (105 aa).

One can recognise a Chorismate mutase domain in the interval 23–105 (SQPVPEIDTL…LRLGRGRLGH (83 aa)). Arg-61, Val-70, and Glu-74 together coordinate chorismate.

In terms of assembly, homodimer. Interacts with AroG.

It localises to the cytoplasm. The catalysed reaction is chorismate = prephenate. The protein operates within metabolic intermediate biosynthesis; prephenate biosynthesis; prephenate from chorismate: step 1/1. Its activity is regulated as follows. The formation of the complex with AroG activates the chorismate mutase activity. In terms of biological role, catalyzes the Claisen rearrangement of chorismate to prephenate. Probably involved in the aromatic amino acid biosynthesis. This chain is Intracellular chorismate mutase, found in Mycobacterium bovis (strain ATCC BAA-935 / AF2122/97).